The chain runs to 507 residues: ATP synthase subunit alpha, chloroplastic (507 aa).

170–177 (GDRQTGKT) is a binding site for ATP.

This sequence belongs to the ATPase alpha/beta chains family. F-type ATPases have 2 components, CF(1) - the catalytic core - and CF(0) - the membrane proton channel. CF(1) has five subunits: alpha(3), beta(3), gamma(1), delta(1), epsilon(1). CF(0) has four main subunits: a, b, b' and c.

It localises to the plastid. The protein resides in the chloroplast thylakoid membrane. The enzyme catalyses ATP + H2O + 4 H(+)(in) = ADP + phosphate + 5 H(+)(out). Produces ATP from ADP in the presence of a proton gradient across the membrane. The alpha chain is a regulatory subunit. The polypeptide is ATP synthase subunit alpha, chloroplastic (Ceratophyllum demersum (Rigid hornwort)).